We begin with the raw amino-acid sequence, 164 residues long: Putative deoxyuridine 5'-triphosphate nucleotidohydrolase (164 aa).

R65–G67 provides a ligand contact to substrate. K71 is modified (N6-acetyllysine; by host). Residues G79–D82, G90, and Y138–G139 contribute to the substrate site.

Belongs to the dUTPase family. Requires Mg(2+) as cofactor.

It catalyses the reaction dUTP + H2O = dUMP + diphosphate + H(+). Its function is as follows. This enzyme is involved in nucleotide metabolism: it produces dUMP, the immediate precursor of thymidine nucleotides and it decreases the intracellular concentration of dUTP so that uracil cannot be incorporated into DNA. The polypeptide is Putative deoxyuridine 5'-triphosphate nucleotidohydrolase (Dryophytes versicolor (chameleon treefrog)).